Reading from the N-terminus, the 110-residue chain is Transcription factor S (110 aa).

8 residues coordinate Zn(2+): Cys4, Cys7, Cys22, Cys25, Cys71, Cys74, Cys99, and Cys102. The TFIIS-type zinc finger occupies 67–107; that stretch reads TKVTCPKCGNDTAYWWEMQTRAGDEPSTIFYKCTKCGYTWR.

This sequence belongs to the archaeal rpoM/eukaryotic RPA12/RPB9/RPC11 RNA polymerase family.

Its subcellular location is the chromosome. Functionally, involved in transcriptional proofreading and fidelity. Induces RNA cleavage activity in RNA polymerase (RNAP). Stimulates transcription elongation by RNAP on both naked DNA and histone-bound DNA (chromatin), facilitating transcription through the histone barrier. Stimulation depends on transcript cleavage. In the presence of TFS, the cleavage activity of RNAP truncates RNA back to position +15 in a stepwise manner by releasing mainly dinucleotides from the 3'-end of the nascent RNA. The truncated RNAs are able to continue elongation. Misincorporation of nucleotides during elongation of transcription leads to arrested elongation complexes which are rescued by TFS-promoted removal of a dinucleotide from the 3'-end. TFS is able to induce a cleavage resynthesis cycle in stalled elongation complexes (resulting from the next missing nucleotide or a reduced incorporation rate of a wrong nucleotide) preventing misincorporation and enabling proofreading in a post-incorporation manner. Pausing of elongation complexes is the main determinant of TFS-induced RNA cleavage. The protein is Transcription factor S of Thermococcus kodakarensis (strain ATCC BAA-918 / JCM 12380 / KOD1) (Pyrococcus kodakaraensis (strain KOD1)).